The primary structure comprises 335 residues: MIAMLTVLLYLGLILEPRTAVQAGHLPKPIIWAEPGSVIAAYTSVITWCQGSWEAQYYHLYKEKSVNPWDTQVPLETRNKAKFNIPSMTTSYAGIYKCYYESAAGFSEHSDAMELVMTGAYENPSLSVYPSSNVTSGVSISFSCSSSIVFGRFILIQEGKHGLSWTLDSQHQANQPSYATFVLDAVTPNHNGTFRCYGYFRNEPQVWSKPSNSLDLMISETKDQSSTPTEDGLETYQKILIGVLVSFLLLFFLLLFLILIGYQYGHKKKANASVKNTQSENNAELNSWNPQNEDPQGIVYAQVKPSRLQKDTACKETQDVTYAQLCIRTQEQNNS.

The N-terminal stretch at 1–23 (MIAMLTVLLYLGLILEPRTAVQA) is a signal peptide. Over 24–238 (GHLPKPIIWA…TEDGLETYQK (215 aa)) the chain is Extracellular. Ig-like C2-type domains are found at residues 42–125 (YTSV…ENPS) and 124–212 (PSLS…KPSN). Residues Cys-49 and Cys-98 are joined by a disulfide bond. Residues Asn-133 and Asn-191 are each glycosylated (N-linked (GlcNAc...) asparagine). Cys-144 and Cys-196 form a disulfide bridge. The helical transmembrane segment at 239 to 260 (ILIGVLVSFLLLFFLLLFLILI) threads the bilayer. Topologically, residues 261 to 335 (GYQYGHKKKA…CIRTQEQNNS (75 aa)) are cytoplasmic. 2 consecutive short sequence motifs (ITIM motif) follow at residues 298 to 303 (IVYAQV) and 320 to 325 (VTYAQL).

As to quaternary structure, interacts (when tyrosine phosphorylated) with SH2 domain-containing phosphatases PTPN6/SHP-1 and PTPN11/SHP-2; interaction with PTPN6 enhances inhibition of mast cell activation. In terms of processing, tyrosine phosphorylated. Expressed on mast cells and natural killer cells (at protein level). Expressed on neutrophils (at protein level). Expressed on eosinophils (at protein level). Expressed on dendritic cells (at protein level). Expressed on memory and marginal zone B cells (at protein level). Expressed on CD8 T cells (at protein level). Expressed in the uterus of pregnant mice where it is detected at day 4.0 of pregnancy with levels dropping at day 4.5. Highly expressed in the luminal epithelium of uterine endometrium with lower levels in the glandular epithelium.

It localises to the cell membrane. Inhibitory receptor involved in the down-regulation of the immune response. Receptor for FN1. Receptor for integrin ITGAV/ITGB3. Inhibits IgE-mediated mast cell activation, at least in part through interaction with ITGAV/ITGB3. Also inhibits KITLG/SCF-mediated mast cell activation. Through interaction with ITGAV/ITGB3, inhibits antibody production by memory and marginal zone B cells, probably by suppressing their differentiation into plasma cells. Inhibits IFNG production by CD8 T cells, CD4 T cells and natural killer cells. Inhibits antigen presentation by dendritic cells to T cells, preventing T cell activation. Inhibits lipopolysaccharide-mediated neutrophil-dependent vascular injury. Suppresses the allergic inflammatory response by inhibiting infiltration of neutrophils and eosinophils and preventing mast cell degranulation. Inhibits lysis by natural killer cells. The protein is Leukocyte immunoglobulin-like receptor subfamily B member 4A of Mus musculus (Mouse).